The following is a 481-amino-acid chain: Glutamyl-tRNA(Gln) amidotransferase subunit A (481 aa).

Residues Lys-79 and Ser-154 each act as charge relay system in the active site. A disordered region spans residues Ser-136 to Gly-157. The active-site Acyl-ester intermediate is the Ser-178.

This sequence belongs to the amidase family. GatA subfamily. In terms of assembly, heterotrimer of A, B and C subunits.

The catalysed reaction is L-glutamyl-tRNA(Gln) + L-glutamine + ATP + H2O = L-glutaminyl-tRNA(Gln) + L-glutamate + ADP + phosphate + H(+). Functionally, allows the formation of correctly charged Gln-tRNA(Gln) through the transamidation of misacylated Glu-tRNA(Gln) in organisms which lack glutaminyl-tRNA synthetase. The reaction takes place in the presence of glutamine and ATP through an activated gamma-phospho-Glu-tRNA(Gln). This is Glutamyl-tRNA(Gln) amidotransferase subunit A from Lachnospira eligens (strain ATCC 27750 / DSM 3376 / VPI C15-48 / C15-B4) (Eubacterium eligens).